A 150-amino-acid polypeptide reads, in one-letter code: UPF0178 protein AZOSEA36080 (150 aa).

Belongs to the UPF0178 family.

This is UPF0178 protein AZOSEA36080 from Aromatoleum aromaticum (strain DSM 19018 / LMG 30748 / EbN1) (Azoarcus sp. (strain EbN1)).